A 224-amino-acid chain; its full sequence is Cytidylate kinase (224 aa).

Residue 12 to 20 participates in ATP binding; the sequence is GPSGAGKGT.

It belongs to the cytidylate kinase family. Type 1 subfamily.

The protein resides in the cytoplasm. The catalysed reaction is CMP + ATP = CDP + ADP. It catalyses the reaction dCMP + ATP = dCDP + ADP. The chain is Cytidylate kinase from Aliivibrio salmonicida (strain LFI1238) (Vibrio salmonicida (strain LFI1238)).